The following is a 470-amino-acid chain: Adenosylhomocysteinase (470 aa).

Substrate-binding residues include Thr61, Asp136, and Glu196. 197–199 (TTT) contributes to the NAD(+) binding site. Residues Lys226 and Asp230 each contribute to the substrate site. NAD(+) is bound by residues Asn231, 260-265 (GYGDVG), Glu283, Asn318, 339-341 (IGH), and Asn384.

Belongs to the adenosylhomocysteinase family. Requires NAD(+) as cofactor.

It is found in the cytoplasm. It carries out the reaction S-adenosyl-L-homocysteine + H2O = L-homocysteine + adenosine. Its pathway is amino-acid biosynthesis; L-homocysteine biosynthesis; L-homocysteine from S-adenosyl-L-homocysteine: step 1/1. May play a key role in the regulation of the intracellular concentration of adenosylhomocysteine. The sequence is that of Adenosylhomocysteinase from Aromatoleum aromaticum (strain DSM 19018 / LMG 30748 / EbN1) (Azoarcus sp. (strain EbN1)).